The primary structure comprises 312 residues: Glyoxylate/hydroxypyruvate reductase A (312 aa).

The active site involves Arg-227. The Proton donor role is filled by His-275.

This sequence belongs to the D-isomer specific 2-hydroxyacid dehydrogenase family. GhrA subfamily.

It is found in the cytoplasm. It catalyses the reaction glycolate + NADP(+) = glyoxylate + NADPH + H(+). The catalysed reaction is (R)-glycerate + NAD(+) = 3-hydroxypyruvate + NADH + H(+). The enzyme catalyses (R)-glycerate + NADP(+) = 3-hydroxypyruvate + NADPH + H(+). Its function is as follows. Catalyzes the NADPH-dependent reduction of glyoxylate and hydroxypyruvate into glycolate and glycerate, respectively. This chain is Glyoxylate/hydroxypyruvate reductase A, found in Escherichia coli O157:H7.